A 434-amino-acid polypeptide reads, in one-letter code: Protein maelstrom homolog (434 aa).

Residues 4-73 constitute a DNA-binding region (HMG box); that stretch reads RRASRNAYYF…AQGKDSGPSE (70 aa).

Belongs to the maelstrom family. Interacts with SMARCB1, SIN3B and DDX4. Interacts with piRNA-associated proteins TDRD1, PIWIL1 and PIWIL2. Interacts with Tex19.1 and, probably, Tex19.2. As to expression, testis-specific. Present in spermatocytes and round and early elongating spermatids.

It is found in the cytoplasm. The protein resides in the nucleus. Plays a central role during spermatogenesis by repressing transposable elements and preventing their mobilization, which is essential for the germline integrity. Acts via the piRNA metabolic process, which mediates the repression of transposable elements during meiosis by forming complexes composed of piRNAs and Piwi proteins and governs the methylation and subsequent repression of transposons. Its association with piP-bodies suggests a participation in the secondary piRNAs metabolic process. Required for the localization of germ-cell factors to the meiotic nuage. The protein is Protein maelstrom homolog of Mus musculus (Mouse).